Consider the following 367-residue polypeptide: Aspartate-semialdehyde dehydrogenase (367 aa).

NADP(+) is bound by residues 10–13 (RGMV), 37–38 (TS), and Q73. R102 contacts phosphate. The active-site Acyl-thioester intermediate is C135. C135 carries the S-cysteinyl cysteine; in inhibited form modification. Residue Q162 participates in substrate binding. NADP(+) contacts are provided by residues 165–166 (SG) and P193. E241 serves as a coordination point for substrate. A phosphate-binding site is contributed by K244. Residue R267 participates in substrate binding. H274 acts as the Proton acceptor in catalysis. Q350 provides a ligand contact to NADP(+).

The protein belongs to the aspartate-semialdehyde dehydrogenase family. In terms of assembly, homodimer.

The enzyme catalyses L-aspartate 4-semialdehyde + phosphate + NADP(+) = 4-phospho-L-aspartate + NADPH + H(+). The protein operates within amino-acid biosynthesis; L-lysine biosynthesis via DAP pathway; (S)-tetrahydrodipicolinate from L-aspartate: step 2/4. It participates in amino-acid biosynthesis; L-methionine biosynthesis via de novo pathway; L-homoserine from L-aspartate: step 2/3. It functions in the pathway amino-acid biosynthesis; L-threonine biosynthesis; L-threonine from L-aspartate: step 2/5. In terms of biological role, catalyzes the NADPH-dependent formation of L-aspartate-semialdehyde (L-ASA) by the reductive dephosphorylation of L-aspartyl-4-phosphate. The sequence is that of Aspartate-semialdehyde dehydrogenase from Escherichia coli O6:H1 (strain CFT073 / ATCC 700928 / UPEC).